A 118-amino-acid polypeptide reads, in one-letter code: Putative pterin-4-alpha-carbinolamine dehydratase (118 aa).

It belongs to the pterin-4-alpha-carbinolamine dehydratase family.

The enzyme catalyses (4aS,6R)-4a-hydroxy-L-erythro-5,6,7,8-tetrahydrobiopterin = (6R)-L-erythro-6,7-dihydrobiopterin + H2O. This is Putative pterin-4-alpha-carbinolamine dehydratase from Pseudomonas putida (strain ATCC 700007 / DSM 6899 / JCM 31910 / BCRC 17059 / LMG 24140 / F1).